The sequence spans 615 residues: Increased rDNA silencing protein 4 (615 aa).

Disordered regions lie at residues 38 to 135 (SNEV…SSHS), 152 to 260 (LLGI…NRSQ), 277 to 304 (PSIASSNTTTTTSNQGSGLPNLVPNYSS), and 323 to 445 (KPKH…NEDK). Over residues 50 to 65 (VSRNPQTRLSEPSLQK) the composition is skewed to polar residues. Low complexity-rich tracts occupy residues 121–135 (HSQSKLSSDNNSSHS) and 157–168 (SRSSSRNGSNES). Position 180 is a phosphoserine (Ser180). Residues 184–198 (LLTSFSSGRRLSSSS) show a composition bias toward low complexity. The span at 248 to 260 (NPDTSDVISNRSQ) shows a compositional bias: polar residues. Over residues 281–290 (SSNTTTTTSN) the composition is skewed to low complexity. The span at 365-377 (ENDHASSLHEGNL) shows a compositional bias: basic and acidic residues. Positions 389–402 (DVYDDTDSDSESDQ) are enriched in acidic residues. Positions 409 to 438 (KPRKRDRIKRKIRNSANKTAHHRPIHRTRD) are enriched in basic residues. An EH domain is found at 460–571 (ERKRYESMWV…QCVWDSVDRY (112 aa)).

Belongs to the IRS4 family. In terms of assembly, interacts with INP51.

In terms of biological role, with TAX4, acts as a positive regulator of INP51 activity and phosphatidylinositol 4,5-bisphosphate turnover. Negatively regulates signaling through the cell integrity pathway, including the MAP kinase SLT2. Also seems to be involved in rDNA silencing. This Saccharomyces cerevisiae (strain ATCC 204508 / S288c) (Baker's yeast) protein is Increased rDNA silencing protein 4 (IRS4).